The chain runs to 126 residues: MTCFKNEKGEVFRLHVNDPRIKTEKLVGVGNTVAATAKAAELEKAKPWYNKSATNPEAVKLIPNLYEWYVTKYDPDHYKRTGVAKWKSVNNITVNSKLFGRAFNEFKRGWIPDEKFYEVYNEICKN.

This is an uncharacterized protein from Escherichia coli (Bacteriophage T4).